A 588-amino-acid polypeptide reads, in one-letter code: Probable cytochrome c oxidase subunit 1-beta (588 aa).

The interval 1–26 (MTATPAQRRPALPATRPYPARHGPKG) is disordered. A helical membrane pass occupies residues 43–63 (VLYLVSATGFFLIGGLLALLM). His87 contributes to the Fe(II)-heme a binding site. Helical transmembrane passes span 90 to 110 (IMLLFYATPVVFGFANAVLPL), 128 to 148 (WLYLFGATMATAGFLTPGGAA), 171 to 191 (LWILGLAVSGLGTILGAVNMI), 214 to 234 (ILITSILVLLAFPILTAALMA), 259 to 279 (LFWFFGHPEVYIIALPFFGII), and 291 to 311 (IFGYTALVYATLAIAALSMAV). The Cu cation site is built by His265 and Tyr269. The 1'-histidyl-3'-tyrosine (His-Tyr) cross-link spans 265 to 269 (HPEVY). Cu cation is bound by residues His314 and His315. 2 consecutive transmembrane segments (helical) span residues 320-340 (GAVLLPFFSMMTFLIAVPTGV) and 360-380 (MLFAIGFIVTFLLGGLSGVIL). His398 serves as a coordination point for heme a3. A run of 3 helical transmembrane segments spans residues 399 to 419 (FHYVLFGTIVFATFAGIYFWF), 434 to 454 (LHFWTTFLGFHLTFLVQHWLG), and 477 to 497 (VSTIGSFLLGISMVTFVWNGF). Fe(II)-heme a is bound at residue His400. The segment at 557-588 (AEAHAGRRAGHGAGAELSVPSTVATKDDDHTS) is disordered.

Belongs to the heme-copper respiratory oxidase family. In terms of assembly, associates with subunits II, III and IV to form cytochrome c oxidase. Requires Cu(2+) as cofactor. Heme is required as a cofactor.

It is found in the cell membrane. The catalysed reaction is 4 Fe(II)-[cytochrome c] + O2 + 8 H(+)(in) = 4 Fe(III)-[cytochrome c] + 2 H2O + 4 H(+)(out). It functions in the pathway energy metabolism; oxidative phosphorylation. Functionally, cytochrome c oxidase is the component of the respiratory chain that catalyzes the reduction of oxygen to water. Subunits 1-3 form the functional core of the enzyme complex. CO I is the catalytic subunit of the enzyme. Electrons originating in cytochrome c are transferred via the copper A center of subunit 2 and heme A of subunit 1 to the bimetallic center formed by heme A3 and copper B. The polypeptide is Probable cytochrome c oxidase subunit 1-beta (ctaD2) (Nocardia farcinica (strain IFM 10152)).